A 501-amino-acid chain; its full sequence is Alpha-internexin (501 aa).

The interval M1–Y87 is head. S72 bears the Phosphoserine mark. The coil 1A stretch occupies residues K88–L129. The region spanning E94–F407 is the IF rod domain. A linker 1 region spans residues R130–L142. The tract at residues F143–L238 is coil 1B. S219 is modified (phosphoserine). The tract at residues L239 to T262 is linker 2. Positions S263–S408 are coil 2. K290 carries the N6-acetyllysine modification. Residues S335 and S498 each carry the phosphoserine modification. Residues T409–M501 form a tail region. Positions S441–M501 are disordered. Residues K488–M501 are compositionally biased toward polar residues.

It belongs to the intermediate filament family. In terms of assembly, forms homodimers (in vitro). Forms heterodimers with NEFL, NEFM or NEFH (in vitro). Post-translationally, O-glycosylated.

In terms of biological role, class-IV neuronal intermediate filament that is able to self-assemble. It is involved in the morphogenesis of neurons. It may form an independent structural network without the involvement of other neurofilaments or it may cooperate with NEFL to form the filamentous backbone to which NEFM and NEFH attach to form the cross-bridges. May also cooperate with the neuronal intermediate filament protein PRPH to form filamentous networks. The protein is Alpha-internexin (Ina) of Mus musculus (Mouse).